Reading from the N-terminus, the 499-residue chain is Putative antiporter subunit mnhD2 (499 aa).

14 helical membrane passes run 1–21 (MSNLIILPMLLPFVCALILVF), 31–51 (ILSITTMIVNTMISIALLIYV), 77–97 (LSLLMVSVSSFVVTLIMAYGF), 107–127 (FHLPTFILLLTVGVIGSFLTS), 129–149 (LFNLYVMFEIMLLASFVLVTL), 160–180 (IVYVVLNILGSWLLLLGIGML), 208–228 (ISLVFLVAFSSKAALVIFMWL), 239–259 (LAALFAALMTKVGAYALIRFF), 272–292 (TLLVFMACITMIIGAFGVIAY), 307–327 (IGFIILGLGSHTISGVNGAIF), 329–349 (LANDIIVKTLLFFVIGSLVYM), 367–387 (FFGVAFVVVIFAIGGVPPFSG), 402–422 (GNYIGLALMIVTSLIAMYSLF), and 449–469 (GLLSVLVVVVLAMGIAAPVVL).

Belongs to the CPA3 antiporters (TC 2.A.63) subunit D family. In terms of assembly, may form a heterooligomeric complex that consists of seven subunits: mnhA2, mnhB2, mnhC2, mnhD2, mnhE2, mnhF2 and mnhG2.

Its subcellular location is the cell membrane. The protein is Putative antiporter subunit mnhD2 (mnhD2) of Staphylococcus epidermidis (strain ATCC 35984 / DSM 28319 / BCRC 17069 / CCUG 31568 / BM 3577 / RP62A).